A 446-amino-acid polypeptide reads, in one-letter code: MENISDLWNSALKELEKKVSKPSYETWLKSTTAHNLKKDVLTITAPNEFARDWLESHYSELISETLYDLTGAKLAIRFIIPQSQAEEDIDLPSVKQKHAHDESNHLPQSMLNPKYTFDTFVIGSGNRFAHAASLAVAEAPAKAYNPLFIYGGVGLGKTHLMHAIGHYVIEHNPNAKVVYLSSEKFTNEFINSIRDNKAVDFRNKYRNVDVLLIDDIQFLAGKEQTQEEFFHTFNALHEESKQIVISSDRPPKEIPTLEDRLRSRFEWGLITDITPPDLETRIAILRKKAKAEGLDIPNEVMLYIANQIDSNIRELEGALIRVVAYSSLINKDMNADLAAEALKNIIPNSIPRIISISDIQKAVGGVYQVKLEDFKAKKRTKSVAFPRQIAMYLSRELTDSSLPKIGEEFGGRDHTTVIHAHEKISKLLKTDTQLQKHVEEVKDILK.

The tract at residues 1 to 81 (MENISDLWNS…AKLAIRFIIP (81 aa)) is domain I, interacts with DnaA modulators. A domain II region spans residues 81–109 (PQSQAEEDIDLPSVKQKHAHDESNHLPQS). The domain III, AAA+ region stretch occupies residues 110–326 (MLNPKYTFDT…GALIRVVAYS (217 aa)). 4 residues coordinate ATP: glycine 154, glycine 156, lysine 157, and threonine 158. A domain IV, binds dsDNA region spans residues 327 to 446 (SLINKDMNAD…HVEEVKDILK (120 aa)).

The protein belongs to the DnaA family. As to quaternary structure, oligomerizes as a right-handed, spiral filament on DNA at oriC.

It localises to the cytoplasm. In terms of biological role, plays an essential role in the initiation and regulation of chromosomal replication. ATP-DnaA binds to the origin of replication (oriC) to initiate formation of the DNA replication initiation complex once per cell cycle. Binds the DnaA box (a 9 base pair repeat at the origin) and separates the double-stranded (ds)DNA. Forms a right-handed helical filament on oriC DNA; dsDNA binds to the exterior of the filament while single-stranded (ss)DNA is stabiized in the filament's interior. The ATP-DnaA-oriC complex binds and stabilizes one strand of the AT-rich DNA unwinding element (DUE), permitting loading of DNA polymerase. After initiation quickly degrades to an ADP-DnaA complex that is not apt for DNA replication. Binds acidic phospholipids. This Bacillus mycoides (strain KBAB4) (Bacillus weihenstephanensis) protein is Chromosomal replication initiator protein DnaA.